The chain runs to 57 residues: Protein new-glue 4 (57 aa).

The signal sequence occupies residues 1-16 (MEWKLLLIVLPWLLVC).

The protein resides in the secreted. In Drosophila melanogaster (Fruit fly), this protein is Protein new-glue 4 (ng4).